The following is a 124-amino-acid chain: Large ribosomal subunit protein uL22 (124 aa).

It belongs to the universal ribosomal protein uL22 family. In terms of assembly, part of the 50S ribosomal subunit.

Its function is as follows. This protein binds specifically to 23S rRNA; its binding is stimulated by other ribosomal proteins, e.g. L4, L17, and L20. It is important during the early stages of 50S assembly. It makes multiple contacts with different domains of the 23S rRNA in the assembled 50S subunit and ribosome. In terms of biological role, the globular domain of the protein is located near the polypeptide exit tunnel on the outside of the subunit, while an extended beta-hairpin is found that lines the wall of the exit tunnel in the center of the 70S ribosome. The chain is Large ribosomal subunit protein uL22 from Treponema pallidum (strain Nichols).